The chain runs to 366 residues: Neutral protease 2 homolog MGYG_04094 (366 aa).

The N-terminal stretch at 1–19 (MQILAALSAIGALVATATA) is a signal peptide. A propeptide spanning residues 20-188 (AAVPNAPAKQ…NKSRSTIDKR (169 aa)) is cleaved from the precursor. 2 disulfides stabilise this stretch: Cys196–Cys267 and Cys274–Cys292. Zn(2+) is bound at residue His317. Residue Glu318 is part of the active site. The Zn(2+) site is built by His321 and Asp332.

This sequence belongs to the peptidase M35 family. The cofactor is Zn(2+).

The protein localises to the secreted. It catalyses the reaction Preferential cleavage of bonds with hydrophobic residues in P1'. Also 3-Asn-|-Gln-4 and 8-Gly-|-Ser-9 bonds in insulin B chain.. Its function is as follows. Secreted metalloproteinase that allows assimilation of proteinaceous substrates. Shows high activities on basic nuclear substrates such as histone and protamine. May be involved in virulence. In Arthroderma gypseum (strain ATCC MYA-4604 / CBS 118893) (Microsporum gypseum), this protein is Neutral protease 2 homolog MGYG_04094.